The chain runs to 250 residues: Cellulose biosynthesis protein BcsQ (250 aa).

9–16 (VRGGVGTT) is an ATP binding site.

It belongs to the BcsQ family.

The protein localises to the cytoplasm. Its function is as follows. Essential for cellulose biosynthesis, shown for strain 1094, a commensal, natural cellulose producer. Also shown in strain W3110 which has a restored reading frame (TAG stop codon to TTG for amino acid 6, called strain AR3110), this protein. May play a role in subcellular localization of an active cellulose biosynthesis apparatus at the bacterial cell pole. The combination of cellulose and the curli fiber network confer cohesion, elasticity and tissue-like properties to colonies. This Escherichia coli (strain K12) protein is Cellulose biosynthesis protein BcsQ.